The following is a 210-amino-acid chain: Inner membrane-spanning protein YciB (210 aa).

Transmembrane regions (helical) follow at residues 19–39 (LVLELGPLMVFFFANSRGDWL), 53–73 (IFIATGLFMAATATALIVSWI), 78–98 (LPMMPLISGIVVFVFGALTLW), 115–135 (LFGAILLGGLLFGKSLLGYVF), 148–168 (KLTIRWGVFFLFLAVLNEIVW), and 175–195 (FWVAFKVWGTMPITILFTLAQ).

This sequence belongs to the YciB family.

Its subcellular location is the cell inner membrane. In terms of biological role, plays a role in cell envelope biogenesis, maintenance of cell envelope integrity and membrane homeostasis. The protein is Inner membrane-spanning protein YciB of Sinorhizobium fredii (strain NBRC 101917 / NGR234).